Reading from the N-terminus, the 884-residue chain is Valine--tRNA ligase (884 aa).

A 'HIGH' region motif is present at residues 43 to 53 (PNVTGSLHIGH). The 'KMSKS' region motif lies at 530–534 (KMSKS). An ATP-binding site is contributed by lysine 533. Positions 817 to 884 (VIDLDAERGR…KLKAALERLM (68 aa)) form a coiled coil.

This sequence belongs to the class-I aminoacyl-tRNA synthetase family. ValS type 1 subfamily. Monomer.

The protein localises to the cytoplasm. It carries out the reaction tRNA(Val) + L-valine + ATP = L-valyl-tRNA(Val) + AMP + diphosphate. In terms of biological role, catalyzes the attachment of valine to tRNA(Val). As ValRS can inadvertently accommodate and process structurally similar amino acids such as threonine, to avoid such errors, it has a 'posttransfer' editing activity that hydrolyzes mischarged Thr-tRNA(Val) in a tRNA-dependent manner. In Zymomonas mobilis subsp. mobilis (strain ATCC 31821 / ZM4 / CP4), this protein is Valine--tRNA ligase.